The following is a 552-amino-acid chain: Putative transport protein HAPS_0158 (552 aa).

5 helical membrane-spanning segments follow: residues 4–24 (IALTVSLLSLVAVIGLWIGHI), 28–48 (GVSLGIGGVLFGGILVSHFMT), 65–85 (FGLILFVYTIGIQVGPGFFAS), 95–115 (AFAVMIVGISGILVILLHKIF), and 157–177 (MGYAIAYPFGIIGILLAMWLI). RCK C-terminal domains follow at residues 193–275 (DSAT…ILGE) and 277–360 (VNVS…IIGN). Helical transmembrane passes span 370-390 (MLPIFIGVGLGVLLGSIPIYL), 393-413 (FPVALKLGLAGGPLVVALILA), 438-458 (IVLFLAVVGWKAGGNFLNTLL), 463-483 (LAWIGYGAIITFVPLIVTGLV), 492-512 (YLSLCGLLAGSMTDPPALAFA), and 532-552 (LVMFCRIILPQILAILLWVAG).

The protein belongs to the AAE transporter (TC 2.A.81) family. YidE subfamily.

It is found in the cell membrane. This is Putative transport protein HAPS_0158 from Glaesserella parasuis serovar 5 (strain SH0165) (Haemophilus parasuis).